We begin with the raw amino-acid sequence, 250 residues long: N-acyl homoserine lactonase (250 aa).

Zn(2+)-binding residues include H104, H106, D108, H109, H169, D191, and H235.

This sequence belongs to the metallo-beta-lactamase superfamily. In terms of assembly, monomer. Requires Zn(2+) as cofactor.

The enzyme catalyses an N-acyl-L-homoserine lactone + H2O = an N-acyl-L-homoserine + H(+). In terms of biological role, catalyzes hydrolysis of N-hexanoyl-(S)-homoserine lactone, but not the R-enantiomer. Hydrolyzes short- and long-chain N-acyl homoserine lactones with or without 3-oxo substitution at C3, has maximum activity on C10-AHL. The polypeptide is N-acyl homoserine lactonase (Bacillus thuringiensis subsp. indiana).